The sequence spans 269 residues: Serine/threonine-protein kinase ZRK7 (269 aa).

One can recognise a Protein kinase domain in the interval 80 to 269 (FDWSYAIGVD…KNRLMVTVIT (190 aa)). Residues 86-94 (IGVDRFVWY) and Lys-106 contribute to the ATP site. The active-site Proton acceptor is Asp-205.

Belongs to the protein kinase superfamily. Ser/Thr protein kinase family. ZRK subfamily.

The enzyme catalyses L-seryl-[protein] + ATP = O-phospho-L-seryl-[protein] + ADP + H(+). It catalyses the reaction L-threonyl-[protein] + ATP = O-phospho-L-threonyl-[protein] + ADP + H(+). This is Serine/threonine-protein kinase ZRK7 from Arabidopsis thaliana (Mouse-ear cress).